The chain runs to 288 residues: MTEGRCAQHPDGLDVQDVCDPDDPRLDDFRDLNSIDRRPDLPTGKALVIAEGVLVVQRMLASRFTPLALFGTDRRLAELKDDLAGVGAPYYRASADVMARVIGFHLNRGVLAAAGRVPEPSVAQVVAGARTVAVLEGVNDHENLGSIFRNAAGLSVDAVVFGTGCADPLYRRAVRVSMGHALLVPYARAADWPTELMTLKESGFRLLAMTPHGNACKLPEAIAAVSHERIALLVGAEGPGLTAAALRISDVRVRIPMSRGTDSLNVATAAALAFYERTRSGHHIGPGT.

Positions 1-12 (MTEGRCAQHPDG) are enriched in basic and acidic residues. The interval 1-20 (MTEGRCAQHPDGLDVQDVCD) is disordered.

It belongs to the class IV-like SAM-binding methyltransferase superfamily. RNA methyltransferase TrmH family.

This is an uncharacterized protein from Mycobacterium tuberculosis (strain ATCC 25618 / H37Rv).